Here is a 311-residue protein sequence, read N- to C-terminus: HPr kinase/phosphorylase (311 aa).

Active-site residues include His-138 and Lys-159. An ATP-binding site is contributed by Gly-153–Ser-160. Ser-160 is a Mg(2+) binding site. Asp-177 serves as the catalytic Proton acceptor; for phosphorylation activity. Proton donor; for dephosphorylation activity. Residues Leu-201 to Asn-210 are important for the catalytic mechanism of both phosphorylation and dephosphorylation. Residue Glu-202 participates in Mg(2+) binding. The active site involves Arg-243. Positions Pro-264–Arg-269 are important for the catalytic mechanism of dephosphorylation.

The protein belongs to the HPrK/P family. As to quaternary structure, homohexamer. The cofactor is Mg(2+).

It catalyses the reaction [HPr protein]-L-serine + ATP = [HPr protein]-O-phospho-L-serine + ADP + H(+). The catalysed reaction is [HPr protein]-O-phospho-L-serine + phosphate + H(+) = [HPr protein]-L-serine + diphosphate. Functionally, catalyzes the ATP- as well as the pyrophosphate-dependent phosphorylation of a specific serine residue in HPr, a phosphocarrier protein of the phosphoenolpyruvate-dependent sugar phosphotransferase system (PTS). HprK/P also catalyzes the pyrophosphate-producing, inorganic phosphate-dependent dephosphorylation (phosphorolysis) of seryl-phosphorylated HPr (P-Ser-HPr). The two antagonistic activities of HprK/P are regulated by several intracellular metabolites, which change their concentration in response to the absence or presence of rapidly metabolisable carbon sources (glucose, fructose, etc.) in the growth medium. Also phosphorylates/dephosphorylates the HPr-like catabolite repression protein crh on a specific serine residue. Therefore, by controlling the phosphorylation state of HPr and crh, HPrK/P is a sensor enzyme that plays a major role in the regulation of carbon metabolism and sugar transport: it mediates carbon catabolite repression (CCR), and regulates PTS-catalyzed carbohydrate uptake and inducer exclusion. The sequence is that of HPr kinase/phosphorylase from Geobacillus sp. (strain WCH70).